The following is an 85-amino-acid chain: Probable [Fe-S]-dependent transcriptional repressor (85 aa).

Positions 56, 61, 64, and 71 each coordinate iron-sulfur cluster.

Belongs to the FeoC family.

May function as a transcriptional regulator that controls feoABC expression. The sequence is that of Probable [Fe-S]-dependent transcriptional repressor from Yersinia pseudotuberculosis serotype O:1b (strain IP 31758).